The sequence spans 282 residues: Putative 4-diphosphocytidyl-2-C-methyl-D-erythritol kinase (282 aa).

Lys9 is an active-site residue. Residue 93-103 coordinates ATP; sequence PVSAGLAGGSA. Residue Asp135 is part of the active site.

The protein belongs to the GHMP kinase family. IspE subfamily.

The enzyme catalyses 4-CDP-2-C-methyl-D-erythritol + ATP = 4-CDP-2-C-methyl-D-erythritol 2-phosphate + ADP + H(+). Catalyzes the phosphorylation of the position 2 hydroxy group of 4-diphosphocytidyl-2C-methyl-D-erythritol. The polypeptide is Putative 4-diphosphocytidyl-2-C-methyl-D-erythritol kinase (Staphylococcus aureus (strain MRSA252)).